The primary structure comprises 232 residues: Large ribosomal subunit protein uL1 (232 aa).

It belongs to the universal ribosomal protein uL1 family. Part of the 50S ribosomal subunit.

Functionally, binds directly to 23S rRNA. The L1 stalk is quite mobile in the ribosome, and is involved in E site tRNA release. Protein L1 is also a translational repressor protein, it controls the translation of the L11 operon by binding to its mRNA. This Chlamydia trachomatis serovar L2 (strain ATCC VR-902B / DSM 19102 / 434/Bu) protein is Large ribosomal subunit protein uL1.